A 341-amino-acid polypeptide reads, in one-letter code: MPEDNLYDISIIGGGPIGMFAATYAGMRSAKVQLLESLGQLGGQPQALFSEKTIYDIPGFSSISGKDLIRNLNTQLQQFNVDVYVNSPVLNIQKTEKNQFKIITNNRISYSKSIIISTGIGSFEPRRLRIANAEALENDKLFYTVNDPSIFENKTIAIAGGGDSAIDWALELNTIAKDTIVIHRRNQFRAMESNVDKLKESGSKIMTPYTIDNLSTDNSHNNLTIQLKKVRTKDTVELSVDALLVNYGFMSNNSILKSWDLDLITTKNNLIPVNSKLETNLQNVYAIGDIANYPGRIDLIAVGMGEAPMAVNNALESLYPEKIQPKHSTQLVKNIKNNENN.

Residues E36, Q44, F49, V89, F123, D289, and T329 each coordinate FAD.

The protein belongs to the ferredoxin--NADP reductase type 2 family. In terms of assembly, homodimer. FAD is required as a cofactor.

The catalysed reaction is 2 reduced [2Fe-2S]-[ferredoxin] + NADP(+) + H(+) = 2 oxidized [2Fe-2S]-[ferredoxin] + NADPH. This is Ferredoxin--NADP reductase from Ligilactobacillus salivarius (strain UCC118) (Lactobacillus salivarius).